Here is a 699-residue protein sequence, read N- to C-terminus: Elongation factor G (699 aa).

Residues 8 to 283 (EQIRNIGICA…AIVDFLPSPI (276 aa)) enclose the tr-type G domain. Residues 17 to 24 (AHIDAGKT), 81 to 85 (DTPGH), and 135 to 138 (NKMD) contribute to the GTP site.

Belongs to the TRAFAC class translation factor GTPase superfamily. Classic translation factor GTPase family. EF-G/EF-2 subfamily.

The protein resides in the cytoplasm. Its function is as follows. Catalyzes the GTP-dependent ribosomal translocation step during translation elongation. During this step, the ribosome changes from the pre-translocational (PRE) to the post-translocational (POST) state as the newly formed A-site-bound peptidyl-tRNA and P-site-bound deacylated tRNA move to the P and E sites, respectively. Catalyzes the coordinated movement of the two tRNA molecules, the mRNA and conformational changes in the ribosome. This chain is Elongation factor G (fusA), found in Rickettsia prowazekii (strain Madrid E).